The primary structure comprises 479 residues: MTSLIDYILSLFRSEDAARSFVAAPGRAMTSAGLIDIAPHQISSVAANVVPGLNLGAGDPMSGLRQAVAARHGFAQDVANVGFAGDAGAGVASVITTDVGAGLASGLGAGFLGQGGLALAASSGGFGGQVGLAAQVGLGFTAVIEAEVGAQVGAGLGIGTGLGAQAGMGFGGGVGLGLGGQAGGVIGGSAAGAIGAGVGGRLGGNGQIGVAGQGAVGAGVGAGVGGQAGIASQIGVSAGGGLGGVGNVSGLTGVSSNAVLASNASGQAGLIASEGAALNGAAMPHLSGPLAGVGVGGQAGAAGGAGLGFGAVGHPTPQPAALGAAGVVAKTEAAAGVVGGVGGATAAGVGGAHGDILGHEGAALGSVDTVNAGVTPVEHGLVLPSGPLIHGGTGGYGGMNPPVTDAPAPQVPARAQPMTTAAEHTPAVTQPQHTPVEPPVHDKPPSHSVFDVGHEPPVTHTPPAPIELPSYGLFGLPGF.

The tract at residues 416–464 (QPMTTAAEHTPAVTQPQHTPVEPPVHDKPPSHSVFDVGHEPPVTHTPPA) is disordered.

This chain is Isoniazid-induced protein IniB (iniB), found in Mycobacterium tuberculosis (strain ATCC 25618 / H37Rv).